Reading from the N-terminus, the 948-residue chain is FRIGIDA-like protein 5 (948 aa).

Residues 47 to 164 are a coiled coil; it reads DSTRSVLEER…VEKHRERIVA (118 aa). Disordered regions lie at residues 447 to 500, 518 to 538, and 804 to 894; these read ESAQ…APSQ, VKES…SGTE, and RNTS…YPSH. 2 stretches are compositionally biased toward basic and acidic residues: residues 459–475 and 518–527; these read SYEK…KSEA and VKESGADHQP. Low complexity predominate over residues 807–817; that stretch reads SNGSGSGSASS. Polar residues predominate over residues 818–830; sequence KPDSTIKQSQTAK. A compositionally biased stretch (basic residues) spans 861 to 872; it reads FSKKNKRGKKRS. The segment covering 873-894 has biased composition (polar residues); it reads MSGNNQSSGHIASHTSNHYPSH.

The protein belongs to the Frigida family. Expressed at low levels during seed development.

The sequence is that of FRIGIDA-like protein 5 (FRL5) from Arabidopsis thaliana (Mouse-ear cress).